Reading from the N-terminus, the 1162-residue chain is Leptin receptor (1162 aa).

The signal sequence occupies residues 1–21 (MTCQKFYVVLLHWEFLYVITA). At 22 to 839 (LNLAYPTSPW…DIAKQQNDAG (818 aa)) the chain is on the extracellular side. 5 cysteine pairs are disulfide-bonded: C37–C90, C89–C99, C131–C142, C186–C195, and C188–C193. Residues N55, N56, N73, and N98 are each glycosylated (N-linked (GlcNAc...) asparagine). N187 is a glycosylation site (N-linked (GlcNAc...) asparagine). Positions 238–331 (PPLGLRMEVT…LPQLFTTQDV (94 aa)) constitute a Fibronectin type-III 1 domain. N-linked (GlcNAc...) asparagine glycosylation is found at N275, N345, and N356. 2 disulfides stabilise this stretch: C350/C410 and C411/C416. N431 carries an N-linked (GlcNAc...) asparagine glycan. Intrachain disulfides connect C434/C445, C471/C526, and C486/C496. Residues 465–482 (HRRSLYCPDNPSIRPTSE) form a leptin-binding region. N-linked (GlcNAc...) asparagine glycans are attached at residues N514, N622, N657, N668, N686, N695, N698, and N726. Fibronectin type-III domains follow at residues 537–632 (PPSN…TLVM), 637–729 (PMRG…NLTF), and 738–831 (AVQS…KDDI). Positions 620–624 (WSNWS) match the WSXWS motif motif. A helical membrane pass occupies residues 840-860 (LYVIVPIIISSCVLLLGTLLI). The Cytoplasmic portion of the chain corresponds to 861 to 1162 (SHQRMKKLFW…IENKMCDLTV (302 aa)). Positions 869 to 877 (FWDDVPNPK) match the Box 1 motif motif. S880 carries the post-translational modification Phosphoserine. The required for JAK2 activation stretch occupies residues 891-896 (ETFEHL). Positions 896–904 (LFTKHAESV) are required for STAT3 phosphorylation. Y985 carries the phosphotyrosine; by JAK2 modification. Y1077 bears the Phosphotyrosine mark. Residue Y1138 is modified to Phosphotyrosine; by JAK2.

Belongs to the type I cytokine receptor family. Type 2 subfamily. Present as a mixture of monomers and dimers. The phosphorylated receptor binds a number of SH2 domain-containing proteins such as JAK2, STAT3, PTPN11, and SOCS3. Interaction with SOCS3 inhibits JAK/STAT signaling and MAPK cascade. In terms of processing, on ligand binding, phosphorylated on two conserved C-terminal tyrosine residues (isoform B only) by JAK2. Tyr-985 is required for complete binding and activation of PTPN11, ERK/FOS activation,for interaction with SOCS3 and SOCS3 mediated inhibition of leptin signaling. Phosphorylation on Tyr-1138 is required for STAT3 binding/activation. Phosphorylation of Tyr-1077 has a more accessory role. In terms of tissue distribution, isoform B is expressed in kidney, liver, lung, ovary, spleen and uterus. Increased level in uterus during gestation. Isoform A and isoform C are predominantly expressed in cerebral microvessels and choroid plexus, with lower levels in cortex, cerebellum and hypothalamus but also liver and lung. Isoform F is expressed at high levels in brain, liver and spleen and less in stomach, kidney, thymus, heart, lung and hypothalamus.

The protein localises to the cell membrane. It localises to the basolateral cell membrane. Its subcellular location is the secreted. Receptor for hormone LEP/leptin. On ligand binding, mediates LEP central and peripheral effects through the activation of different signaling pathways such as JAK2/STAT3 and MAPK cascade/FOS. In the hypothalamus, LEP acts as an appetite-regulating factor that induces a decrease in food intake and an increase in energy consumption by inducing anorexinogenic factors and suppressing orexigenic neuropeptides, also regulates bone mass and secretion of hypothalamo-pituitary-adrenal hormones. In the periphery, increases basal metabolism, influences reproductive function, regulates pancreatic beta-cell function and insulin secretion, is pro-angiogenic and affects innate and adaptive immunity. Control of energy homeostasis and melanocortin production (stimulation of POMC and full repression of AgRP transcription) is mediated by STAT3 signaling, whereas distinct signals regulate NPY and the control of fertility, growth and glucose homeostasis. Involved in the regulation of counter-regulatory response to hypoglycemia by inhibiting neurons of the parabrachial nucleus. Has a specific effect on T lymphocyte responses, differentially regulating the proliferation of naive and memory T-cells. Leptin increases Th1 and suppresses Th2 cytokine production. Functionally, may transport LEP across the blood-brain barrier. Binds LEP and mediates LEP endocytosis. Does not induce phosphorylation of and activate STAT3. In terms of biological role, antagonizes Isoform A and isoform B-mediated LEP binding and endocytosis. In Rattus norvegicus (Rat), this protein is Leptin receptor (Lepr).